A 125-amino-acid chain; its full sequence is Small ribosomal subunit protein bS6m (125 aa).

It belongs to the bacterial ribosomal protein bS6 family. Component of the mitochondrial small ribosomal subunit (mt-SSU). Mature mammalian 55S mitochondrial ribosomes consist of a small (28S) and a large (39S) subunit. The 28S small subunit contains a 12S ribosomal RNA (12S mt-rRNA) and 30 different proteins. The 39S large subunit contains a 16S rRNA (16S mt-rRNA), a copy of mitochondrial valine transfer RNA (mt-tRNA(Val)), which plays an integral structural role, and 52 different proteins.

The protein localises to the mitochondrion. The protein is Small ribosomal subunit protein bS6m (MRPS6) of Homo sapiens (Human).